A 137-amino-acid polypeptide reads, in one-letter code: Large ribosomal subunit protein uL16 (137 aa).

It belongs to the universal ribosomal protein uL16 family. In terms of assembly, part of the 50S ribosomal subunit.

Binds 23S rRNA and is also seen to make contacts with the A and possibly P site tRNAs. This Oleidesulfovibrio alaskensis (strain ATCC BAA-1058 / DSM 17464 / G20) (Desulfovibrio alaskensis) protein is Large ribosomal subunit protein uL16.